The following is a 154-amino-acid chain: SsrA-binding protein (154 aa).

It belongs to the SmpB family.

The protein resides in the cytoplasm. Its function is as follows. Required for rescue of stalled ribosomes mediated by trans-translation. Binds to transfer-messenger RNA (tmRNA), required for stable association of tmRNA with ribosomes. tmRNA and SmpB together mimic tRNA shape, replacing the anticodon stem-loop with SmpB. tmRNA is encoded by the ssrA gene; the 2 termini fold to resemble tRNA(Ala) and it encodes a 'tag peptide', a short internal open reading frame. During trans-translation Ala-aminoacylated tmRNA acts like a tRNA, entering the A-site of stalled ribosomes, displacing the stalled mRNA. The ribosome then switches to translate the ORF on the tmRNA; the nascent peptide is terminated with the 'tag peptide' encoded by the tmRNA and targeted for degradation. The ribosome is freed to recommence translation, which seems to be the essential function of trans-translation. The polypeptide is SsrA-binding protein (Streptococcus thermophilus (strain CNRZ 1066)).